The sequence spans 877 residues: MKKRIDYLSNKQNKYSIRRFTVGTTSVIVGATILFGIGNHQAQASEQSNDTTQSSKNNASADSEKNNMIETPQLNTTANDTSDISANTNSANVDSTTKPMSTQTSNTTTTEPASTNETPQPTAIKNQATAAKMQDQTVPQEANSQVDNKTTNDANSIATNSELKNSQTLDLPQSSPQTISNAQGTSKPSVRTRAVRSLAVAEPVVNAADAKGTNVNDKVTASNFKLEKTTFDPNQSGNTFMAANFTVTDKVKSGDYFTAKLPDSLTGNGDVDYSNSNNTMPIADIKSTNGDVVAKATYDILTKTYTFVFTDYVNNKENINGQFSLPLFTDRAKAPKSGTYDANINIADEMFNNKITYNYSSPIAGIDKPNGANISSQIIGVDTASGQNTYKQTVFVNPKQRVLGNTWVYIKGYQDKIEESSGKVSATDTKLRIFEVNDTSKLSDSYYADPNDSNLKEVTDQFKNRIYYEHPNVASIKFGDITKTYVVLVEGHYDNTGKNLKTQVIQENVDPVTNRDYSIFGWNNENVVRYGGGSADGDSAVNPKDPTPGPPVDPEPSPDPEPEPTPDPEPSPDPEPEPSPDPDPDSDSDSDSGSDSDSGSDSDSESDSDSDSDSDSDSDSDSESDSDSESDSDSDSDSDSDSDSDSESDSDSDSDSDSDSDSDSESDSDSESDSESDSDSDSDSDSDSDSDSDSDSDSDSDSDSDSDSDSDSESDSDSDSDSDSDSDSDSDSDSDSDSDSDSDSDSDSDSDSDSDSDSDSDSDSDSDSDSDSDSDSDSDSDSDSDSDSDSDSDSDSDSDSDSDSRVTPPNNEQKAPSNPKGEVNHSNKVSKQHKTDALPETGDKSENTNATLFGAMMALLGSLLLFRKRKQDHKEKA.

A signal peptide spans 1-44 (MKKRIDYLSNKQNKYSIRRFTVGTTSVIVGATILFGIGNHQAQA). Positions 15–26 (YSIRRFTVGTTS) match the YSIRK-G/S signaling motif motif. 2 stretches are compositionally biased toward polar residues: residues 44 to 61 (ASEQSNDTTQSSKNNASA) and 68 to 95 (MIETPQLNTTANDTSDISANTNSANVDS). Residues 44–192 (ASEQSNDTTQ…QGTSKPSVRT (149 aa)) form a disordered region. The interval 45-542 (SEQSNDTTQS…GSADGDSAVN (498 aa)) is ligand binding A region. Positions 96–119 (TTKPMSTQTSNTTTTEPASTNETP) are enriched in low complexity. The span at 120–189 (QPTAIKNQAT…SNAQGTSKPS (70 aa)) shows a compositional bias: polar residues. Residues 272–276 (DYSNS) carry the MIDAS-like motif motif. The segment at 530–849 (YGGGSADGDS…ETGDKSENTN (320 aa)) is disordered. Over residues 545-555 (DPTPGPPVDPE) the composition is skewed to pro residues. Positions 556 to 801 (PSPDPEPEPT…SDSDSDSDSD (246 aa)) are enriched in acidic residues. Over residues 805 to 816 (RVTPPNNEQKAP) the composition is skewed to polar residues. Basic and acidic residues predominate over residues 833 to 846 (HKTDALPETGDKSE). The LPXTG sorting signal motif lies at 838–842 (LPETG). T841 bears the Pentaglycyl murein peptidoglycan amidated threonine mark. Positions 842–877 (GDKSENTNATLFGAMMALLGSLLLFRKRKQDHKEKA) are cleaved as a propeptide — removed by sortase.

It belongs to the serine-aspartate repeat-containing protein (SDr) family. In terms of processing, proteolytically cleaved by aureolysin (aur). This cleavage leads to the inactivation of ClfB.

It is found in the secreted. It localises to the cell wall. Functionally, cell surface-associated protein implicated in virulence by promoting bacterial attachment to both alpha- and beta-chains of human fibrinogen and inducing the formation of bacterial clumps. In Staphylococcus aureus (strain Mu50 / ATCC 700699), this protein is Clumping factor B (clfB).